The following is a 374-amino-acid chain: MTKHGAVVVPEDAVVAAAAVGRHFSFPPPRTGGVGGDSCKKLAAQQIDLGAAVIGSWLDSMKASSPRHRLVAPAVAAAAADAEHDEWMEKHPSALGKFEALAAAAKGKRIVVFLDYDGTLSPIVEDPDRAVMTDEMRDAVRGVAARFPTAIVSGRCRDKVLSFVGLEELYYAGSHGMDIQGPTNAAASKGGEEEEESVLCQPAREFLPMIGEAYAALVEKVEGVIPGAKVENNKFCLSVHFRRVDERRWGAVADQVRAVLRGYPRLRLTQGRKVLEVRPAIKWDKGEALRFLLSALGFSAAGDVEDDGDDDDAFPIYIGDDRTDEDAFRVLRARGHGAGILVSRFPKDTCASFSLRDPGEVKDFLRKLVTCAAA.

It belongs to the trehalose phosphatase family. It depends on a divalent metal cation as a cofactor.

The enzyme catalyses alpha,alpha-trehalose 6-phosphate + H2O = alpha,alpha-trehalose + phosphate. The protein operates within glycan biosynthesis; trehalose biosynthesis. Functionally, removes the phosphate from trehalose 6-phosphate to produce free trehalose. Trehalose accumulation in plant may improve abiotic stress tolerance. The sequence is that of Probable trehalose-phosphate phosphatase 9 (TPP9) from Oryza sativa subsp. japonica (Rice).